We begin with the raw amino-acid sequence, 214 residues long: uncharacterized protein (214 aa).

2 consecutive transmembrane segments (helical) span residues 19–39 (IAIFALAFISFILILIISYIL) and 50–70 (LALFLMDNLYSILLKIFLLIG).

It localises to the cell membrane. This is an uncharacterized protein from Methanocaldococcus jannaschii (strain ATCC 43067 / DSM 2661 / JAL-1 / JCM 10045 / NBRC 100440) (Methanococcus jannaschii).